The primary structure comprises 668 residues: Small ribosomal subunit protein mS81 (rPPR8) (668 aa).

Residues 1–36 (MRYQQWRLMLLRSYHRSHLPYLSPCSQVTSISSRSF) constitute a mitochondrion transit peptide. PPR repeat units follow at residues 286–320 (DEKTYNAMARVLGKEKFLDRFQNIVVEMRSAGYEV), 321–355 (EIETYVRVSTRFCQTKLIKEAVDLFEIAMAGSSSS), 396–430 (TDSLLKSVLKSLRSVDRVEQSNELLKEMKRGGYVP), 431–465 (SGDMQSMIASSLSRKGKKDEADEFVDFMESSGNNL), 466–496 (DDKAMASLVEGYCDSGNLDEALVCFEKMVGN), 502–537 (ADYSFEKLVLAYCNKNQVRDAYKLLSAQVTKNQLKP), and 543–577 (KSLVTNLLTKKIARDGGFEEALSLLPIMKDHGFPP).

This sequence belongs to the PPR family. P subfamily. Component of the mitochondrial ribosome small subunit.

It is found in the mitochondrion. The protein is Small ribosomal subunit protein mS81 (rPPR8) of Arabidopsis thaliana (Mouse-ear cress).